The primary structure comprises 166 residues: MAKQDVQNGEFLEKLIAVNRVSKVVKGGRIFSFTALTVVGDGNGRVGFGYGKAREVPAAIQKAMEKARRNMVDVDLNGHTLQHPIKGRHSGSKVYMQPASEGTGIIAGGAMRAVLEVAGVQNVLSKCYGSTNPINVVRATINALTEMNSPAKVAAKRGLSVEEILG.

The region spanning F11–V74 is the S5 DRBM domain.

It belongs to the universal ribosomal protein uS5 family. Part of the 30S ribosomal subunit. Contacts proteins S4 and S8.

Its function is as follows. With S4 and S12 plays an important role in translational accuracy. Functionally, located at the back of the 30S subunit body where it stabilizes the conformation of the head with respect to the body. This Alteromonas mediterranea (strain DSM 17117 / CIP 110805 / LMG 28347 / Deep ecotype) protein is Small ribosomal subunit protein uS5.